Reading from the N-terminus, the 129-residue chain is Small ribosomal subunit protein uS12 (129 aa).

Position 89 is a 3-methylthioaspartic acid (Asp89). Positions 101–129 (TLDTSGVSDRKQSRSKYGAKQPKAVAAKK) are disordered.

This sequence belongs to the universal ribosomal protein uS12 family. Part of the 30S ribosomal subunit. Contacts proteins S8 and S17. May interact with IF1 in the 30S initiation complex.

In terms of biological role, with S4 and S5 plays an important role in translational accuracy. Its function is as follows. Interacts with and stabilizes bases of the 16S rRNA that are involved in tRNA selection in the A site and with the mRNA backbone. Located at the interface of the 30S and 50S subunits, it traverses the body of the 30S subunit contacting proteins on the other side and probably holding the rRNA structure together. The combined cluster of proteins S8, S12 and S17 appears to hold together the shoulder and platform of the 30S subunit. This is Small ribosomal subunit protein uS12 from Chlorobium luteolum (strain DSM 273 / BCRC 81028 / 2530) (Pelodictyon luteolum).